The chain runs to 394 residues: Flavohemoprotein (394 aa).

The region spanning 1 to 136 (MLSENTINIV…LANVFIQREE (136 aa)) is the Globin domain. A heme b-binding site is contributed by histidine 85. Residues tyrosine 95 and glutamate 135 each act as charge relay system in the active site. The segment at 147 to 394 (GGWRGLREFE…YECFGPHKVV (248 aa)) is reductase. Residues 150-255 (RGLREFELVE…AAPAGDFFLD (106 aa)) enclose the FAD-binding FR-type domain. Residues tyrosine 188 and 204-207 (RQYS) contribute to the FAD site. 268 to 273 (GVGLTP) is a binding site for NADP(+). Residue 387–390 (CFGP) participates in FAD binding.

Belongs to the globin family. Two-domain flavohemoproteins subfamily. The protein in the C-terminal section; belongs to the flavoprotein pyridine nucleotide cytochrome reductase family. It depends on heme b as a cofactor. Requires FAD as cofactor.

It catalyses the reaction 2 nitric oxide + NADPH + 2 O2 = 2 nitrate + NADP(+) + H(+). It carries out the reaction 2 nitric oxide + NADH + 2 O2 = 2 nitrate + NAD(+) + H(+). In terms of biological role, is involved in NO detoxification in an aerobic process, termed nitric oxide dioxygenase (NOD) reaction that utilizes O(2) and NAD(P)H to convert NO to nitrate, which protects the bacterium from various noxious nitrogen compounds. Therefore, plays a central role in the inducible response to nitrosative stress. The chain is Flavohemoprotein from Vibrio vulnificus (strain YJ016).